Consider the following 231-residue polypeptide: MRLSPDEIIFWQHGFLKLNATIVFTWGLMLVLAVGSKLITRKLSTGLKRSRWQNLLEIVVTAIEKQIEEVGLRDPKKYLGFLGTLFLFVATASLCTVIPGYEPPTGSLSTTAALAFCVFVAVPFFGIKDQGLGGYLKSYVEPTVIMLPFNIISEISRTLALAVRLFGNMMSGAMIIGILLTITPFIFPIVMTALGLLTGMVQAYIFSILAAVYIAAATRGRKPKPEPGEKH.

Helical transmembrane passes span 14-34 (GFLK…VLAV), 78-98 (YLGF…CTVI), 107-127 (SLST…FFGI), 174-194 (MIIG…MTAL), and 196-216 (LLTG…YIAA).

It belongs to the ATPase A chain family. As to quaternary structure, F-type ATPases have 2 components, CF(1) - the catalytic core - and CF(0) - the membrane proton channel. CF(1) has five subunits: alpha(3), beta(3), gamma(1), delta(1), epsilon(1). CF(0) has three main subunits: a(1), b(2) and c(9-12). The alpha and beta chains form an alternating ring which encloses part of the gamma chain. CF(1) is attached to CF(0) by a central stalk formed by the gamma and epsilon chains, while a peripheral stalk is formed by the delta and b chains.

Its subcellular location is the cell inner membrane. Its function is as follows. Key component of the proton channel; it plays a direct role in the translocation of protons across the membrane. The chain is ATP synthase subunit a from Albidiferax ferrireducens (strain ATCC BAA-621 / DSM 15236 / T118) (Rhodoferax ferrireducens).